We begin with the raw amino-acid sequence, 382 residues long: S-adenosylmethionine synthase (382 aa).

Glu10 is a Mg(2+) binding site. Position 16 (His16) interacts with ATP. Position 44 (Glu44) interacts with K(+). Residues Glu57 and Gln100 each contribute to the L-methionine site. ATP is bound by residues 166-168 (DTK), 234-237 (SGRF), Asp245, 251-252 (RK), Ala268, Lys272, and Lys276. Asp245 provides a ligand contact to L-methionine. An L-methionine-binding site is contributed by Lys276.

It belongs to the AdoMet synthase family. Requires Mg(2+) as cofactor. K(+) serves as cofactor.

The enzyme catalyses L-methionine + ATP + H2O = S-adenosyl-L-methionine + phosphate + diphosphate. It functions in the pathway amino-acid biosynthesis; S-adenosyl-L-methionine biosynthesis; S-adenosyl-L-methionine from L-methionine: step 1/1. In terms of biological role, catalyzes the formation of S-adenosylmethionine from methionine and ATP. The reaction comprises two steps that are both catalyzed by the same enzyme: formation of S-adenosylmethionine (AdoMet) and triphosphate, and subsequent hydrolysis of the triphosphate. This Schizosaccharomyces pombe (strain 972 / ATCC 24843) (Fission yeast) protein is S-adenosylmethionine synthase (sam1).